Here is a 129-residue protein sequence, read N- to C-terminus: Prefoldin subunit 6 (129 aa).

Position 2 is an N-acetylalanine (A2). K21 is modified (N6-acetyllysine). At K66 the chain carries N6-acetyllysine; alternate. K66 participates in a covalent cross-link: Glycyl lysine isopeptide (Lys-Gly) (interchain with G-Cter in SUMO1); alternate. A Glycyl lysine isopeptide (Lys-Gly) (interchain with G-Cter in SUMO2); alternate cross-link involves residue K66.

This sequence belongs to the prefoldin subunit beta family. As to quaternary structure, heterohexamer of two PFD-alpha type and four PFD-beta type subunits. Component of the PAQosome complex which is responsible for the biogenesis of several protein complexes and which consists of R2TP complex members RUVBL1, RUVBL2, RPAP3 and PIH1D1, URI complex members PFDN2, PFDN6, PDRG1, UXT and URI1 as well as ASDURF, POLR2E and DNAAF10/WDR92.

Its function is as follows. Binds specifically to cytosolic chaperonin (c-CPN) and transfers target proteins to it. Binds to nascent polypeptide chain and promotes folding in an environment in which there are many competing pathways for nonnative proteins. This is Prefoldin subunit 6 (PFDN6) from Canis lupus familiaris (Dog).